We begin with the raw amino-acid sequence, 470 residues long: tRNA modification GTPase MnmE (470 aa).

(6S)-5-formyl-5,6,7,8-tetrahydrofolate contacts are provided by Arg24, Glu81, and Lys122. A TrmE-type G domain is found at 218-383 (GIKIVIAGKP…LQEYLSNNIK (166 aa)). Asn228 is a binding site for K(+). GTP contacts are provided by residues 228-233 (NAGKSS), 247-253 (STISGTT), and 272-275 (DTAG). Ser232 lines the Mg(2+) pocket. K(+) contacts are provided by Ser247, Ile249, and Thr252. A Mg(2+)-binding site is contributed by Thr253. Lys470 provides a ligand contact to (6S)-5-formyl-5,6,7,8-tetrahydrofolate.

Belongs to the TRAFAC class TrmE-Era-EngA-EngB-Septin-like GTPase superfamily. TrmE GTPase family. In terms of assembly, homodimer. Heterotetramer of two MnmE and two MnmG subunits. The cofactor is K(+).

The protein localises to the cytoplasm. In terms of biological role, exhibits a very high intrinsic GTPase hydrolysis rate. Involved in the addition of a carboxymethylaminomethyl (cmnm) group at the wobble position (U34) of certain tRNAs, forming tRNA-cmnm(5)s(2)U34. The chain is tRNA modification GTPase MnmE from Blochmanniella pennsylvanica (strain BPEN).